A 234-amino-acid chain; its full sequence is Endonuclease NucS (234 aa).

Belongs to the NucS endonuclease family.

Its subcellular location is the cytoplasm. Cleaves both 3' and 5' ssDNA extremities of branched DNA structures. This is Endonuclease NucS from Bifidobacterium animalis subsp. lactis (strain AD011).